The chain runs to 151 residues: UPF0756 membrane protein Lreu_0946 (151 aa).

4 consecutive transmembrane segments (helical) span residues 4–24, 52–72, 77–97, and 115–135; these read WLFL…SLII, WGVT…QIGF, AAFK…VAIL, and LVLG…GPVI.

Belongs to the UPF0756 family.

Its subcellular location is the cell membrane. The polypeptide is UPF0756 membrane protein Lreu_0946 (Limosilactobacillus reuteri (strain DSM 20016) (Lactobacillus reuteri)).